Consider the following 105-residue polypeptide: Heat shock protein HspQ (105 aa).

A disordered region spans residues 75 to 105 (GEMQEEHPEQPSMDELARSIRQQLQAPRLRN).

Belongs to the HspQ family.

It localises to the cytoplasm. Involved in the degradation of certain denaturated proteins, including DnaA, during heat shock stress. In Cronobacter sakazakii (strain ATCC BAA-894) (Enterobacter sakazakii), this protein is Heat shock protein HspQ.